The chain runs to 136 residues: MSNSSPETVSQPSQEVKYGEREIAEGQLITFPNPRVGRRYDINITLPEFTCKCPFSGYPDFATIYITYVPDERVVELKALKLYINSYRDRYISHEESANQILDDFVAACDPLEATVKADFTPRGNVHTVVEVKHRK.

Cys53 acts as the Thioimide intermediate in catalysis. Asp60 functions as the Proton donor in the catalytic mechanism. Residues 75 to 77 (VEL) and 94 to 95 (HE) contribute to the substrate site.

It belongs to the GTP cyclohydrolase I family. QueF type 1 subfamily.

The protein localises to the cytoplasm. The catalysed reaction is 7-aminomethyl-7-carbaguanine + 2 NADP(+) = 7-cyano-7-deazaguanine + 2 NADPH + 3 H(+). The protein operates within tRNA modification; tRNA-queuosine biosynthesis. Functionally, catalyzes the NADPH-dependent reduction of 7-cyano-7-deazaguanine (preQ0) to 7-aminomethyl-7-deazaguanine (preQ1). This chain is NADPH-dependent 7-cyano-7-deazaguanine reductase, found in Trichormus variabilis (strain ATCC 29413 / PCC 7937) (Anabaena variabilis).